Here is a 50-residue protein sequence, read N- to C-terminus: Mast cell degranulating peptide (50 aa).

Residues 1–27 (MISMLRCTFFFVSVILITSYFVTPTMS) form the signal peptide. At lysine 29 the chain carries N6-formyllysine. Residues cysteine 30 and cysteine 42 are joined by a disulfide bond. 2 positions are modified to N6-formyllysine: lysine 44 and lysine 48. Residue asparagine 49 is modified to Asparagine amide.

In terms of tissue distribution, expressed by the venom gland.

It localises to the secreted. In terms of biological role, potent anti-inflammatory agent. At low concentrations, mediates the degranulation of mast cells thus evoking an inflammatory response. Also acts as a neurotoxin capable of blocking a class of voltage-gated potassium channels. This Apis cerana cerana (Oriental honeybee) protein is Mast cell degranulating peptide.